The chain runs to 464 residues: MAVYNYDVVVLGSGPAGEGAAMNAAKAGRKVAMVDSRRQVGGNCTHLGTIPSKALRHSVRQIMQFNTNPMFRAIGEPRWFSFPDVLKSAEKVISKQVASRTGYYARNRVDVFFGTGSFADEQTIEVVCANGVVEKLVAKHIIIATGSRPYRPADIDFHHPRIYDSDTILSLGHTPRKLIVYGAGVIGCEYASIFSGLGVLVELVDNRGQLLSFLDSEISQALSYHFSNNNITVRHNEEYDRVEGVDNGVILHLKSGKKIKADALLWCNGRTGNTDQLGLENIGVKVNSRGQIEVDENYRTCVQNIYGAGDVIGWPSLASAAHDQGRSAAGSIVDNGSWRFVNDVPTGIYTIPEISSIGKNEQELTQAKVPYEVGKAFFKSMARAQIAGEPQGMLKILFHRETLEVLGVHCFGYQASEIVHIGQAIMNQPGELNTLKYFVNTTFNYPTMAEAYRVAAYDGLNRLF.

35–44 is a binding site for FAD; that stretch reads DSRRQVGGNC.

It belongs to the class-I pyridine nucleotide-disulfide oxidoreductase family. Requires FAD as cofactor.

The protein localises to the cytoplasm. It carries out the reaction NAD(+) + NADPH = NADH + NADP(+). In terms of biological role, conversion of NADPH, generated by peripheral catabolic pathways, to NADH, which can enter the respiratory chain for energy generation. The protein is Soluble pyridine nucleotide transhydrogenase of Pseudomonas fluorescens (strain Pf0-1).